A 244-amino-acid polypeptide reads, in one-letter code: GTP cyclohydrolase 1 type 2 homolog (244 aa).

A divalent metal cation is bound by residues His65, His66, Asp102, His216, and Glu220.

The protein belongs to the GTP cyclohydrolase I type 2/NIF3 family. As to quaternary structure, homohexamer; trimer of dimers, that forms a hollow cage-like architecture.

In terms of biological role, DNA-binding protein exhibiting the ability to bind to both single-stranded and double-stranded DNA. The protein is GTP cyclohydrolase 1 type 2 homolog of Methanocaldococcus jannaschii (strain ATCC 43067 / DSM 2661 / JAL-1 / JCM 10045 / NBRC 100440) (Methanococcus jannaschii).